We begin with the raw amino-acid sequence, 26 residues long: Neprilysin (26 aa).

It belongs to the peptidase M13 family. It depends on Zn(2+) as a cofactor.

It localises to the cell membrane. It catalyses the reaction Preferential cleavage of polypeptides between hydrophobic residues, particularly with Phe or Tyr at P1'.. The catalysed reaction is substance P + H2O = substance P(1-9) + L-Leu-L-Met-NH2. The enzyme catalyses substance P + H2O = substance P(1-7) + L-Phe-Gly-L-Leu-L-Met-NH2. It carries out the reaction neurotensin + H2O = neurotensin(1-11) + L-isoleucyl-L-leucine. It catalyses the reaction neurotensin + H2O = neurotensin(1-10) + L-tyrosyl-L-isoleucyl-L-leucine. Thermolysin-like specificity, but is almost confined on acting on polypeptides of up to 30 amino acids. Biologically important in the destruction of opioid peptides such as Met- and Leu-enkephalins by cleavage of a Gly-Phe bond. Catalyzes cleavage of bradykinin, substance P and neurotensin peptides. Able to cleave angiotensin-1, angiotensin-2 and angiotensin 1-9. Involved in the degradation of atrial natriuretic factor (ANF) and brain natriuretic factor (BNP(1-32)). Displays UV-inducible elastase activity toward skin preelastic and elastic fibers. The chain is Neprilysin (MME) from Sus scrofa (Pig).